We begin with the raw amino-acid sequence, 43 residues long: Cytochrome b559 subunit beta (43 aa).

Residues 18–34 (WLAVHTLAIPTVFFLGA) form a helical membrane-spanning segment. Residue His22 coordinates heme.

The protein belongs to the PsbE/PsbF family. Heterodimer of an alpha subunit and a beta subunit. PSII is composed of 1 copy each of membrane proteins PsbA, PsbB, PsbC, PsbD, PsbE, PsbF, PsbH, PsbI, PsbJ, PsbK, PsbL, PsbM, PsbT, PsbX, PsbY, PsbZ, Psb30/Ycf12, peripheral proteins PsbO, CyanoQ (PsbQ), PsbU, PsbV and a large number of cofactors. It forms dimeric complexes. Heme b serves as cofactor.

The protein localises to the cellular thylakoid membrane. In terms of biological role, this b-type cytochrome is tightly associated with the reaction center of photosystem II (PSII). PSII is a light-driven water:plastoquinone oxidoreductase that uses light energy to abstract electrons from H(2)O, generating O(2) and a proton gradient subsequently used for ATP formation. It consists of a core antenna complex that captures photons, and an electron transfer chain that converts photonic excitation into a charge separation. This chain is Cytochrome b559 subunit beta, found in Synechococcus sp. (strain JA-2-3B'a(2-13)) (Cyanobacteria bacterium Yellowstone B-Prime).